The sequence spans 1191 residues: DNA-directed RNA polymerase subunit beta (1191 aa).

A disordered region spans residues 1164 to 1191; that stretch reads EEEDLQPADALNIAPQPDTEEEPVESFE. Residues 1181-1191 show a composition bias toward acidic residues; sequence DTEEEPVESFE.

The protein belongs to the RNA polymerase beta chain family. The RNAP catalytic core consists of 2 alpha, 1 beta, 1 beta' and 1 omega subunit. When a sigma factor is associated with the core the holoenzyme is formed, which can initiate transcription.

The enzyme catalyses RNA(n) + a ribonucleoside 5'-triphosphate = RNA(n+1) + diphosphate. Its function is as follows. DNA-dependent RNA polymerase catalyzes the transcription of DNA into RNA using the four ribonucleoside triphosphates as substrates. The chain is DNA-directed RNA polymerase subunit beta from Lysinibacillus sphaericus (strain C3-41).